We begin with the raw amino-acid sequence, 151 residues long: Small ribosomal subunit protein uS15 (151 aa).

Positions 1–20 are disordered; that stretch reads MARLHSGKRGSSGSTRPLRT.

This sequence belongs to the universal ribosomal protein uS15 family. Part of the 30S ribosomal subunit.

The polypeptide is Small ribosomal subunit protein uS15 (Methanococcus aeolicus (strain ATCC BAA-1280 / DSM 17508 / OCM 812 / Nankai-3)).